The following is an 88-amino-acid chain: Small ribosomal subunit protein uS15 (88 aa).

A disordered region spans residues 1–23; sequence MIASSVKAEVVKSNARSANDTGS. Positions 14 to 23 are enriched in polar residues; it reads NARSANDTGS.

The protein belongs to the universal ribosomal protein uS15 family. As to quaternary structure, part of the 30S ribosomal subunit. Forms a bridge to the 50S subunit in the 70S ribosome, contacting the 23S rRNA.

One of the primary rRNA binding proteins, it binds directly to 16S rRNA where it helps nucleate assembly of the platform of the 30S subunit by binding and bridging several RNA helices of the 16S rRNA. In terms of biological role, forms an intersubunit bridge (bridge B4) with the 23S rRNA of the 50S subunit in the ribosome. In Delftia acidovorans (strain DSM 14801 / SPH-1), this protein is Small ribosomal subunit protein uS15.